The chain runs to 627 residues: MGKVIGIDLGTTNSCVAVMEGKEPKVIDNAEGERTTPSIIAFANSERLVGQPAKRQAVTNPRNTIYAVKRLIGRNFTDPMVRKDQGLVPYNIVKADNGDAWVEADNNKYSPSQISAFILQKMKETAENYLGEKVTQAVITVPAYFNDAQRQATKDAGKIAGLEVLRIINEPTAAALAYGFEKSSSKTIAVYDLGGGTFDVSILEISDGVFEVKSTNGDTFLGGEDFDTRILNHLIDVFKKDSGIDLSKDPLALQRLKEAAEKAKKELSSTSATDINLPYITADSTGPKHLNIKFTRAELEKLVDDLIEKTIEPCRQALKDAGFKPTDIQEVVLVGGMTRMPKVQEAVKKFFGREPHKGVNPDEVVALGAAIQGGVLNKEVTDILLLDVTPLSLGIETLGGVFTRLIDRNTTIPSKKSQVFSTADDNQHAVTIRVFQGEREMAKDNKLLGQFNLEGIPPAPRGVPQIEVTFDIDANGIVHVSAKDKASGKEQKVTIQASGGLSDSEIEQMVKDAEHNADEDKKRKELIETKNAADSLVYSTEKTLREYGDKLSSEEKGAVEEALASLKSALESEDASLIKEKTNNLTAANMKIGETMYKAQTENQHSEANTVNDEKVVDADFQDVDKK.

A Phosphothreonine; by autocatalysis modification is found at T197. A compositionally biased stretch (polar residues) spans 602 to 611; it reads ENQHSEANTV. The segment at 602 to 627 is disordered; the sequence is ENQHSEANTVNDEKVVDADFQDVDKK. Over residues 612 to 627 the composition is skewed to basic and acidic residues; it reads NDEKVVDADFQDVDKK.

The protein belongs to the heat shock protein 70 family.

Acts as a chaperone. This Rickettsia felis (strain ATCC VR-1525 / URRWXCal2) (Rickettsia azadi) protein is Chaperone protein DnaK.